A 306-amino-acid polypeptide reads, in one-letter code: D-alanine--D-alanine ligase (306 aa).

An ATP-grasp domain is found at 104–303 (KMLWKAFGLP…FEQLVVKILE (200 aa)). 134 to 189 (VAKLGLPLMVKPSLEGSSVGLTKVKAVEELKSAVEYALKFDNTILIEEWLAGDELT) lines the ATP pocket. 3 residues coordinate Mg(2+): aspartate 257, glutamate 270, and asparagine 272.

This sequence belongs to the D-alanine--D-alanine ligase family. The cofactor is Mg(2+). Requires Mn(2+) as cofactor.

The protein resides in the cytoplasm. It catalyses the reaction 2 D-alanine + ATP = D-alanyl-D-alanine + ADP + phosphate + H(+). The protein operates within cell wall biogenesis; peptidoglycan biosynthesis. Functionally, cell wall formation. The chain is D-alanine--D-alanine ligase from Haemophilus influenzae (strain PittGG).